The sequence spans 85 residues: Small ribosomal subunit protein bS18 (85 aa).

Belongs to the bacterial ribosomal protein bS18 family. As to quaternary structure, part of the 30S ribosomal subunit. Forms a tight heterodimer with protein bS6.

Its function is as follows. Binds as a heterodimer with protein bS6 to the central domain of the 16S rRNA, where it helps stabilize the platform of the 30S subunit. This chain is Small ribosomal subunit protein bS18, found in Helicobacter pylori (strain P12).